The chain runs to 263 residues: Acyl-[acyl-carrier-protein]--UDP-N-acetylglucosamine O-acyltransferase (263 aa).

The protein belongs to the transferase hexapeptide repeat family. LpxA subfamily. In terms of assembly, homotrimer.

It localises to the cytoplasm. It catalyses the reaction a (3R)-hydroxyacyl-[ACP] + UDP-N-acetyl-alpha-D-glucosamine = a UDP-3-O-[(3R)-3-hydroxyacyl]-N-acetyl-alpha-D-glucosamine + holo-[ACP]. Its pathway is glycolipid biosynthesis; lipid IV(A) biosynthesis; lipid IV(A) from (3R)-3-hydroxytetradecanoyl-[acyl-carrier-protein] and UDP-N-acetyl-alpha-D-glucosamine: step 1/6. Functionally, involved in the biosynthesis of lipid A, a phosphorylated glycolipid that anchors the lipopolysaccharide to the outer membrane of the cell. The polypeptide is Acyl-[acyl-carrier-protein]--UDP-N-acetylglucosamine O-acyltransferase (Xylella fastidiosa (strain Temecula1 / ATCC 700964)).